The following is a 273-amino-acid chain: Undecaprenyl-diphosphatase (273 aa).

The next 8 membrane-spanning stretches (helical) occupy residues 18-40, 45-65, 92-112, 114-134, 151-171, 189-209, 225-245, and 253-273; these read GLTEFLPVSSTGHMILVGSLLGF, AKTFEVIIQLGSILAVVVVFW, GHILLGMIPAVVLGLVFHEQI, AIFAPIYVMYALVVGGVLLLA, LTYLQAFLIGCFQCLALWPGF, YAASEFSFILAVPMMLGATVL, MFAIGFVTAFVVALLAIKFFL, and FVPFAIYRFILAVVVYWILIG.

Belongs to the UppP family.

It localises to the cell inner membrane. The catalysed reaction is di-trans,octa-cis-undecaprenyl diphosphate + H2O = di-trans,octa-cis-undecaprenyl phosphate + phosphate + H(+). Its function is as follows. Catalyzes the dephosphorylation of undecaprenyl diphosphate (UPP). Confers resistance to bacitracin. The sequence is that of Undecaprenyl-diphosphatase from Sodalis glossinidius (strain morsitans).